A 188-amino-acid chain; its full sequence is MKGLKITAAAGAMTLFFASMAYASGDSGHGPDWGNFAFRVVNFVIFAGIIWKAAGKKIVGFFTGRRQGIEQELNDLETRKTEAKKQLAEVERRIANLESERQAILADYRAQGENIKAAIIDKAEKSASLITEQAKRTADNEIKAAIDAMRAQMADEIIVAAEKLLAEKLTANEHEKLIDKYLTKVVLN.

The helical transmembrane segment at 7–26 (TAAAGAMTLFFASMAYASGD) threads the bilayer.

The protein belongs to the ATPase B chain family. F-type ATPases have 2 components, F(1) - the catalytic core - and F(0) - the membrane proton channel. F(1) has five subunits: alpha(3), beta(3), gamma(1), delta(1), epsilon(1). F(0) has three main subunits: a(1), b(2) and c(10-14). The alpha and beta chains form an alternating ring which encloses part of the gamma chain. F(1) is attached to F(0) by a central stalk formed by the gamma and epsilon chains, while a peripheral stalk is formed by the delta and b chains.

It localises to the cell inner membrane. Its function is as follows. F(1)F(0) ATP synthase produces ATP from ADP in the presence of a proton or sodium gradient. F-type ATPases consist of two structural domains, F(1) containing the extramembraneous catalytic core and F(0) containing the membrane proton channel, linked together by a central stalk and a peripheral stalk. During catalysis, ATP synthesis in the catalytic domain of F(1) is coupled via a rotary mechanism of the central stalk subunits to proton translocation. Component of the F(0) channel, it forms part of the peripheral stalk, linking F(1) to F(0). The sequence is that of ATP synthase subunit b from Nitratidesulfovibrio vulgaris (strain DP4) (Desulfovibrio vulgaris).